We begin with the raw amino-acid sequence, 212 residues long: Uracil phosphoribosyltransferase (212 aa).

Residues arginine 78, arginine 103, and 130-138 (DPMLATGGS) contribute to the 5-phospho-alpha-D-ribose 1-diphosphate site. Uracil-binding positions include isoleucine 193 and 198–200 (GDA). Aspartate 199 is a binding site for 5-phospho-alpha-D-ribose 1-diphosphate.

This sequence belongs to the UPRTase family. Mg(2+) serves as cofactor.

The catalysed reaction is UMP + diphosphate = 5-phospho-alpha-D-ribose 1-diphosphate + uracil. The protein operates within pyrimidine metabolism; UMP biosynthesis via salvage pathway; UMP from uracil: step 1/1. With respect to regulation, allosterically activated by GTP. In terms of biological role, catalyzes the conversion of uracil and 5-phospho-alpha-D-ribose 1-diphosphate (PRPP) to UMP and diphosphate. The protein is Uracil phosphoribosyltransferase of Bordetella petrii (strain ATCC BAA-461 / DSM 12804 / CCUG 43448).